The sequence spans 150 residues: DNA-directed RNA polymerases I, II, and III subunit RPABC3 (150 aa).

Alanine 2 carries the post-translational modification N-acetylalanine.

This sequence belongs to the eukaryotic RPB8 RNA polymerase subunit family. Component of the RNA polymerase I (Pol I), RNA polymerase II (Pol II) and RNA polymerase III (Pol III) complexes consisting of at least 13, 12 and 17 subunits, respectively. Pol I complex consists of a ten-subunit catalytic core composed of POLR1A/RPA1, POLR1B/RPA2, POLR1C/RPAC1, POLR1D/RPAC2, POLR1H/RPA12, POLR2E/RPABC1, POLR2F/RPABC2, POLR2H/RPABC3, POLR2K/RPABC4 and POLR2L/RPABC5; a mobile stalk subunit POLR1F/RPA43 protruding from the core and additional subunits homologous to general transcription factors POLR1E/RPA49 and POLR1G/RPA34. Part of Pol I pre-initiation complex (PIC), in which Pol I core assembles with RRN3 and promoter-bound UTBF and SL1/TIF-IB complex. Pol II complex contains a ten-subunit catalytic core composed of POLR2A/RPB1, POLR2B/RPB2, POLR2C/RPB3, POLR2I/RPB9, POLR2J/RPB11, POLR2E/RPABC1, POLR2F/RPABC2, POLR2H/RPABC3, POLR2K/RPABC4 and POLR2L/RPABC5 and a mobile stalk composed of two subunits POLR2D/RPB4 and POLR2G/RPB7. Part of Pol II(G) complex, in which Pol II core associates with an additional subunit POLR2M; unlike conventional Pol II, Pol II(G) functions as a transcriptional repressor. Part of Pol II pre-initiation complex (PIC), in which Pol II core assembles with Mediator, general transcription factors and other specific initiation factors including GTF2E1, GTF2E2, GTF2F1, GTF2F2, TCEA1, ERCC2, ERCC3, GTF2H2, GTF2H3, GTF2H4, GTF2H5, GTF2A1, GTF2A2, GTF2B and TBP; this large multi-subunit PIC complex mediates DNA unwinding and targets Pol II core to the transcription start site where the first phosphodiester bond forms. Directly interacts with POLR2A. Pol III complex consists of a ten-subunit catalytic core composed of POLR3A/RPC1, POLR3B/RPC2, POLR1C/RPAC1, POLR1D/RPAC2, POLR3K/RPC10, POLR2E/RPABC1, POLR2F/RPABC2, POLR2H/RPABC3, POLR2K/RPABC4 and POLR2L/RPABC5; a mobile stalk composed of two subunits POLR3H/RPC8 and CRCP/RPC9, protruding from the core and functioning primarily in transcription initiation; and additional subunits homologous to general transcription factors of the RNA polymerase II machinery, POLR3C/RPC3-POLR3F/RPC6-POLR3G/RPC7 heterotrimer required for transcription initiation and POLR3D/RPC4-POLR3E/RPC5 heterodimer involved in both transcription initiation and termination.

It is found in the nucleus. The protein localises to the nucleolus. Functionally, DNA-dependent RNA polymerase catalyzes the transcription of DNA into RNA using the four ribonucleoside triphosphates as substrates. Common component of RNA polymerases I, II and III which synthesize ribosomal RNA precursors, mRNA precursors and many functional non-coding RNAs, and small RNAs, such as 5S rRNA and tRNAs, respectively. The chain is DNA-directed RNA polymerases I, II, and III subunit RPABC3 (POLR2H) from Bos taurus (Bovine).